The following is a 170-amino-acid chain: ATP synthase subunit b (170 aa).

Residues 5–25 (YFIPCLLLPTMMLASGGGGET) traverse the membrane as a helical segment.

This sequence belongs to the ATPase B chain family. In terms of assembly, F-type ATPases have 2 components, F(1) - the catalytic core - and F(0) - the membrane proton channel. F(1) has five subunits: alpha(3), beta(3), gamma(1), delta(1), epsilon(1). F(0) has three main subunits: a(1), b(2) and c(10-14). The alpha and beta chains form an alternating ring which encloses part of the gamma chain. F(1) is attached to F(0) by a central stalk formed by the gamma and epsilon chains, while a peripheral stalk is formed by the delta and b chains.

It is found in the cell inner membrane. F(1)F(0) ATP synthase produces ATP from ADP in the presence of a proton or sodium gradient. F-type ATPases consist of two structural domains, F(1) containing the extramembraneous catalytic core and F(0) containing the membrane proton channel, linked together by a central stalk and a peripheral stalk. During catalysis, ATP synthesis in the catalytic domain of F(1) is coupled via a rotary mechanism of the central stalk subunits to proton translocation. Its function is as follows. Component of the F(0) channel, it forms part of the peripheral stalk, linking F(1) to F(0). The sequence is that of ATP synthase subunit b from Wolinella succinogenes (strain ATCC 29543 / DSM 1740 / CCUG 13145 / JCM 31913 / LMG 7466 / NCTC 11488 / FDC 602W) (Vibrio succinogenes).